Here is a 342-residue protein sequence, read N- to C-terminus: MTDTDRLLSAGRRAEDVDAALRPRSLDEFVGQQAARDNLRVFIEAARQRGDALDHVLFFGPPGLGKTTLAQIIAKEMGAGFRATSGPVIAKSGDLAALLTNLEDGDVLFIDEIHRLQPQVEEVLYPAMEDRALDLMIGEGPSARSVRIDLPRFTLVGATTRQGLITTPLRDRFGIPIRLQFYTVEELERVVSRAARLLDLPIASDGAMEIARRARGTPRIAGRLLRRVRDFAHVLGADIVDAKVADQSLNRLEVDNLGLDAMDRRYLHMIADIYRGGPVGVETLAAGLSEPRDTIEDVIEPYLIQLGLIARTARGRCLNGRGWKHLGLNPPPEAGQDGLFDV.

Residues 4–182 (TDRLLSAGRR…FGIPIRLQFY (179 aa)) are large ATPase domain (RuvB-L). The ATP site is built by Leu21, Arg22, Gly63, Lys66, Thr67, Thr68, Arg172, Tyr182, and Arg219. Thr67 lines the Mg(2+) pocket. A small ATPAse domain (RuvB-S) region spans residues 183–253 (TVEELERVVS…VADQSLNRLE (71 aa)). The interval 256–342 (NLGLDAMDRR…EAGQDGLFDV (87 aa)) is head domain (RuvB-H). 3 residues coordinate DNA: Arg292, Arg311, and Arg316.

The protein belongs to the RuvB family. Homohexamer. Forms an RuvA(8)-RuvB(12)-Holliday junction (HJ) complex. HJ DNA is sandwiched between 2 RuvA tetramers; dsDNA enters through RuvA and exits via RuvB. An RuvB hexamer assembles on each DNA strand where it exits the tetramer. Each RuvB hexamer is contacted by two RuvA subunits (via domain III) on 2 adjacent RuvB subunits; this complex drives branch migration. In the full resolvosome a probable DNA-RuvA(4)-RuvB(12)-RuvC(2) complex forms which resolves the HJ.

The protein resides in the cytoplasm. It catalyses the reaction ATP + H2O = ADP + phosphate + H(+). The RuvA-RuvB-RuvC complex processes Holliday junction (HJ) DNA during genetic recombination and DNA repair, while the RuvA-RuvB complex plays an important role in the rescue of blocked DNA replication forks via replication fork reversal (RFR). RuvA specifically binds to HJ cruciform DNA, conferring on it an open structure. The RuvB hexamer acts as an ATP-dependent pump, pulling dsDNA into and through the RuvAB complex. RuvB forms 2 homohexamers on either side of HJ DNA bound by 1 or 2 RuvA tetramers; 4 subunits per hexamer contact DNA at a time. Coordinated motions by a converter formed by DNA-disengaged RuvB subunits stimulates ATP hydrolysis and nucleotide exchange. Immobilization of the converter enables RuvB to convert the ATP-contained energy into a lever motion, pulling 2 nucleotides of DNA out of the RuvA tetramer per ATP hydrolyzed, thus driving DNA branch migration. The RuvB motors rotate together with the DNA substrate, which together with the progressing nucleotide cycle form the mechanistic basis for DNA recombination by continuous HJ branch migration. Branch migration allows RuvC to scan DNA until it finds its consensus sequence, where it cleaves and resolves cruciform DNA. The chain is Holliday junction branch migration complex subunit RuvB from Rhizorhabdus wittichii (strain DSM 6014 / CCUG 31198 / JCM 15750 / NBRC 105917 / EY 4224 / RW1) (Sphingomonas wittichii).